The sequence spans 405 residues: Polyketide biosynthesis cytochrome P450 PksS (405 aa).

The helical transmembrane segment at 231–251 threads the bilayer; it reads LYSMLFLLVVAGLETTVNLLG. Cys-352 serves as a coordination point for heme.

Belongs to the cytochrome P450 family.

The protein localises to the cell membrane. Its pathway is antibiotic biosynthesis; bacillaene biosynthesis. Its function is as follows. Involved in the metabolism of the antibiotic polyketide bacillaene which is involved in secondary metabolism. The substrate is dihydrobacillaene. The polypeptide is Polyketide biosynthesis cytochrome P450 PksS (pksS) (Bacillus subtilis (strain 168)).